The sequence spans 176 residues: Nucleoside triphosphate/diphosphate phosphatase (176 aa).

Arginine 23 serves as the catalytic Proton donor. Mg(2+) contacts are provided by asparagine 87, aspartate 103, aspartate 105, aspartate 107, aspartate 120, and glutamate 123.

This sequence belongs to the Ntdp family. It depends on Mg(2+) as a cofactor.

It catalyses the reaction a ribonucleoside 5'-triphosphate + H2O = a ribonucleoside 5'-diphosphate + phosphate + H(+). The enzyme catalyses a ribonucleoside 5'-diphosphate + H2O = a ribonucleoside 5'-phosphate + phosphate + H(+). Its function is as follows. Has nucleoside phosphatase activity towards nucleoside triphosphates and nucleoside diphosphates. The sequence is that of Nucleoside triphosphate/diphosphate phosphatase from Bacillus cytotoxicus (strain DSM 22905 / CIP 110041 / 391-98 / NVH 391-98).